We begin with the raw amino-acid sequence, 416 residues long: Tyrosine--tRNA ligase (416 aa).

Tyr-34 lines the L-tyrosine pocket. A 'HIGH' region motif is present at residues 39–48 (PTGDSLHIGH). The L-tyrosine site is built by Tyr-165 and Gln-169. A 'KMSKS' region motif is present at residues 227-231 (KFGKT). Lys-230 serves as a coordination point for ATP. The region spanning 349–416 (ENIIIWLTDN…KKHYYLARVK (68 aa)) is the S4 RNA-binding domain.

The protein belongs to the class-I aminoacyl-tRNA synthetase family. TyrS type 1 subfamily. As to quaternary structure, homodimer.

Its subcellular location is the cytoplasm. The enzyme catalyses tRNA(Tyr) + L-tyrosine + ATP = L-tyrosyl-tRNA(Tyr) + AMP + diphosphate + H(+). In terms of biological role, catalyzes the attachment of tyrosine to tRNA(Tyr) in a two-step reaction: tyrosine is first activated by ATP to form Tyr-AMP and then transferred to the acceptor end of tRNA(Tyr). The protein is Tyrosine--tRNA ligase of Limosilactobacillus reuteri (strain DSM 20016) (Lactobacillus reuteri).